Consider the following 485-residue polypeptide: Glutamate--tRNA ligase (485 aa).

A 'HIGH' region motif is present at residues 11–21 (PSPTGHLHIGN). The 'KMSKS' region signature appears at 252-256 (KLSKR). K255 contributes to the ATP binding site.

This sequence belongs to the class-I aminoacyl-tRNA synthetase family. Glutamate--tRNA ligase type 1 subfamily. In terms of assembly, monomer.

Its subcellular location is the cytoplasm. It carries out the reaction tRNA(Glu) + L-glutamate + ATP = L-glutamyl-tRNA(Glu) + AMP + diphosphate. Functionally, catalyzes the attachment of glutamate to tRNA(Glu) in a two-step reaction: glutamate is first activated by ATP to form Glu-AMP and then transferred to the acceptor end of tRNA(Glu). The sequence is that of Glutamate--tRNA ligase from Bacillus cytotoxicus (strain DSM 22905 / CIP 110041 / 391-98 / NVH 391-98).